The following is a 200-amino-acid chain: Superoxide dismutase [Mn] 1 (200 aa).

Mn(2+)-binding residues include histidine 29, histidine 76, aspartate 158, and histidine 162.

It belongs to the iron/manganese superoxide dismutase family. Mn(2+) is required as a cofactor.

It carries out the reaction 2 superoxide + 2 H(+) = H2O2 + O2. In terms of biological role, destroys superoxide anion radicals which are normally produced within the cells and which are toxic to biological systems. The polypeptide is Superoxide dismutase [Mn] 1 (sod1) (Haloferax volcanii (strain ATCC 29605 / DSM 3757 / JCM 8879 / NBRC 14742 / NCIMB 2012 / VKM B-1768 / DS2) (Halobacterium volcanii)).